Reading from the N-terminus, the 1120-residue chain is TBC1 domain family member 8B (1120 aa).

GRAM domains are found at residues 145–212 (LKFE…EKTS) and 285–353 (EQFN…DKTN). Residues 487–674 (GIPETLRGEL…NVVDCFFYDG (188 aa)) form the Rab-GAP TBC domain. Residues 858–893 (NKDSLALWTFRLLDENSDCLINFKEFSSAIDIMYNG) form the EF-hand domain. Residues 1035 to 1066 (SPTSSAKGFSGTVCGSGGPSEEKTGSHLEKDP) form a disordered region. Residues 1054-1066 (SEEKTGSHLEKDP) are compositionally biased toward basic and acidic residues.

Interacts (via domain Rab-GAP TBC) with RAB11B (in GTP-bound form). Kidney (at protein level).

Its subcellular location is the cytoplasm. It is found in the cytosol. In terms of biological role, involved in vesicular recycling, probably as a RAB11B GTPase-activating protein. This Homo sapiens (Human) protein is TBC1 domain family member 8B (TBC1D8B).